Here is a 134-residue protein sequence, read N- to C-terminus: Large ribosomal subunit protein bL17 (134 aa).

The protein belongs to the bacterial ribosomal protein bL17 family. In terms of assembly, part of the 50S ribosomal subunit. Contacts protein L32.

The protein is Large ribosomal subunit protein bL17 of Anaplasma marginale (strain Florida).